Consider the following 693-residue polypeptide: Glycine--tRNA ligase beta subunit (693 aa).

Belongs to the class-II aminoacyl-tRNA synthetase family. In terms of assembly, tetramer of two alpha and two beta subunits.

It localises to the cytoplasm. The enzyme catalyses tRNA(Gly) + glycine + ATP = glycyl-tRNA(Gly) + AMP + diphosphate. The chain is Glycine--tRNA ligase beta subunit (glyS) from Halalkalibacterium halodurans (strain ATCC BAA-125 / DSM 18197 / FERM 7344 / JCM 9153 / C-125) (Bacillus halodurans).